Here is a 136-residue protein sequence, read N- to C-terminus: UPF0213 protein ASA_0550 (136 aa).

Residues 17 to 92 (GQWSIYLVRT…KQQSKAFKER (76 aa)) form the GIY-YIG domain.

Belongs to the UPF0213 family.

This Aeromonas salmonicida (strain A449) protein is UPF0213 protein ASA_0550.